The chain runs to 76 residues: Acyl carrier protein (76 aa).

In terms of domain architecture, Carrier spans 1–76 (MATFDEVKEV…AAVDYIGSKQ (76 aa)). Serine 36 bears the O-(pantetheine 4'-phosphoryl)serine mark.

This sequence belongs to the acyl carrier protein (ACP) family. In terms of processing, 4'-phosphopantetheine is transferred from CoA to a specific serine of apo-ACP by AcpS. This modification is essential for activity because fatty acids are bound in thioester linkage to the sulfhydryl of the prosthetic group.

The protein resides in the cytoplasm. The protein operates within lipid metabolism; fatty acid biosynthesis. Functionally, carrier of the growing fatty acid chain in fatty acid biosynthesis. The polypeptide is Acyl carrier protein (Deinococcus geothermalis (strain DSM 11300 / CIP 105573 / AG-3a)).